Reading from the N-terminus, the 257-residue chain is Septu protein PtuB (257 aa).

The region spanning 49-96 (CVYCECRLDEESKYMEVEHFLPKDTYPNLVVNWRNLLPSCKRCNGKKG) is the HNH domain.

In terms of biological role, component of antiviral defense system Septu type I, composed of PtuA and PtuB. Expression of Septu type I in B.subtilis (strain BEST7003) confers resistance to phages SBSphiC and SBSphiJ. May be a nuclease. The polypeptide is Septu protein PtuB (Bacillus thuringiensis).